We begin with the raw amino-acid sequence, 693 residues long: Polyribonucleotide nucleotidyltransferase (693 aa).

The Mg(2+) site is built by D485 and D491. One can recognise a KH domain in the interval 552–611 (PRIMVLEINPSKIGDLIGPSGKNIKKIIEETHTTINIKPEGLVYISAPDQESAEKAAQMV). In terms of domain architecture, S1 motif spans 621-691 (GDIFLGKVIR…SSGRISLTRK (71 aa)).

It belongs to the polyribonucleotide nucleotidyltransferase family. It depends on Mg(2+) as a cofactor.

It localises to the cytoplasm. It carries out the reaction RNA(n+1) + phosphate = RNA(n) + a ribonucleoside 5'-diphosphate. Involved in mRNA degradation. Catalyzes the phosphorolysis of single-stranded polyribonucleotides processively in the 3'- to 5'-direction. The polypeptide is Polyribonucleotide nucleotidyltransferase (Dictyoglomus thermophilum (strain ATCC 35947 / DSM 3960 / H-6-12)).